The chain runs to 214 residues: Peptide methionine sulfoxide reductase B1, chloroplastic (214 aa).

Residues 1-53 (MAMRQYAAATAASSSFRARPRARPSCLPAAALPLAPCCGVAWSRASYRRASVR) constitute a chloroplast transit peptide. Positions 58–81 (ASSSSSSSSSSPSPQGQAQAQAQG) are enriched in low complexity. The disordered stretch occupies residues 58-91 (ASSSSSSSSSSPSPQGQAQAQAQGKPNYSTSLTD). The MsrB domain maps to 91–213 (DEEWRKRLTK…NSASLKLKKT (123 aa)). The Zn(2+) site is built by Cys130, Cys133, Cys179, and Cys182. The active-site Nucleophile is the Cys202.

This sequence belongs to the MsrB Met sulfoxide reductase family. Zn(2+) serves as cofactor. In terms of tissue distribution, expressed in leaves and flowers.

The protein resides in the plastid. Its subcellular location is the chloroplast. It catalyses the reaction L-methionyl-[protein] + [thioredoxin]-disulfide + H2O = L-methionyl-(R)-S-oxide-[protein] + [thioredoxin]-dithiol. Its function is as follows. Catalyzes the reduction of methionine sulfoxide (MetSO) to methionine in proteins. Involved in abiotic stress response. Plays a protective role against oxidative stress by restoring activity to proteins that have been inactivated by methionine oxidation. MSRB family specifically reduces the MetSO R-enantiomer. The polypeptide is Peptide methionine sulfoxide reductase B1, chloroplastic (Oryza sativa subsp. japonica (Rice)).